The sequence spans 98 residues: NADH-ubiquinone oxidoreductase chain 4L (98 aa).

Transmembrane regions (helical) follow at residues 1–21, 29–49, and 61–81; these read MALIYTNTLLAFTISLLGLLL, SLLCLEGMMLSMFVMVAVMIL, and IVLLVFAACEAALGLSLLVMV.

This sequence belongs to the complex I subunit 4L family. As to quaternary structure, core subunit of respiratory chain NADH dehydrogenase (Complex I) which is composed of 45 different subunits.

The protein resides in the mitochondrion inner membrane. It carries out the reaction a ubiquinone + NADH + 5 H(+)(in) = a ubiquinol + NAD(+) + 4 H(+)(out). In terms of biological role, core subunit of the mitochondrial membrane respiratory chain NADH dehydrogenase (Complex I) which catalyzes electron transfer from NADH through the respiratory chain, using ubiquinone as an electron acceptor. Part of the enzyme membrane arm which is embedded in the lipid bilayer and involved in proton translocation. This chain is NADH-ubiquinone oxidoreductase chain 4L (MT-ND4L), found in Rhinolophus monoceros (Formosan lesser horseshoe bat).